The following is a 292-amino-acid chain: Cyclin-dependent kinase 5 (292 aa).

One can recognise a Protein kinase domain in the interval Tyr-4–Phe-286. ATP-binding positions include Ile-10–Val-18 and Lys-33. Tyr-15 is modified (phosphotyrosine; by ABL1, EPHA4 and FYN). The residue at position 17 (Thr-17) is a Phosphothreonine. At Lys-56 the chain carries N6-acetyllysine. Position 72 is a phosphoserine (Ser-72). Asp-126 functions as the Proton acceptor in the catalytic mechanism. Ser-159 is modified (phosphoserine).

It belongs to the protein kinase superfamily. CMGC Ser/Thr protein kinase family. CDC2/CDKX subfamily. As to quaternary structure, heterodimer composed of a catalytic subunit CDK5 and a regulatory subunit CDK5R1 (p25) and macromolecular complex composed of at least CDK5, CDK5R1 (p35) and CDK5RAP1 or CDK5RAP2 or CDK5RAP3. Only the heterodimer shows kinase activity. Under neurotoxic stress and neuronal injury conditions, p35 is cleaved by calpain to generate p25 that hyperactivates CDK5, that becomes functionally disabled and often toxic. Found in a trimolecular complex with CABLES1 and ABL1. Interacts with CABLES1 and CABLES2. Interacts with AATK and GSTP1. Binds to HDAC1 when in complex with p25. Interaction with myristoylation p35 promotes CDK5 association with membranes. Both isoforms 1 and 2 interacts with beta-catenin/CTNNB1. Interacts with delta-catenin/CTNND2 and APEX1. Interacts with P53/TP53 in neurons. Interacts with EPHA4; may mediate the activation of NGEF by EPHA4. Interacts with PTK2/FAK1. The complex p35/CDK5 interacts with CLOCK. Post-translationally, phosphorylation on Tyr-15 by ABL1 and FYN, and on Ser-159 by casein kinase 1 promotes kinase activity. By contrast, phosphorylation at Thr-14 inhibits activity. In terms of processing, phosphorylation at Ser-159 is essential for maximal catalytic activity.

It is found in the nucleus. The protein resides in the cytoplasm. It localises to the cell membrane. The protein localises to the perikaryon. Its subcellular location is the cell projection. It is found in the lamellipodium. The protein resides in the growth cone. It localises to the postsynaptic density. The protein localises to the synapse. The catalysed reaction is L-seryl-[protein] + ATP = O-phospho-L-seryl-[protein] + ADP + H(+). It catalyses the reaction L-threonyl-[protein] + ATP = O-phospho-L-threonyl-[protein] + ADP + H(+). Its activity is regulated as follows. Inhibited by 2-(1-ethyl-2-hydroxyethylamino)-6-benzylamino-9-isopropylpurine (roscovitine), 1-isopropyl-4-aminobenzyl-6-ether-linked benzimidazoles, resveratrol, AT-7519 and olomoucine. Activated by CDK5R1 (p35) and CDK5R2 (p39) during the development of the nervous system; degradation of CDK5R1 (p35) and CDK5R2 (p39) by proteasome result in down regulation of kinase activity, during this process, CDK5 phosphorylates p35 and induces its ubiquitination and subsequent degradation. Kinase activity is mainly determined by the amount of p35 available and subcellular location; reversible association to plasma membrane inhibits activity. Long-term inactivation as well as CDK5R1 (p25)-mediated hyperactivation of CDK5 triggers cell death. The pro-death activity of hyperactivated CDK5 is suppressed by membrane association of CDK5, via myristoylation of p35. Brain-derived neurotrophic factor, glial-derived neurotrophic factor, nerve growth factor (NGF), retinoic acid, laminin and neuregulin promote activity. Neurotoxicity enhances nuclear activity, thus leading to MEF2 phosphorylation and inhibition prior to apoptosis of cortical neurons. Repression by GSTP1 via p25/p35 translocation prevents neurodegeneration. Proline-directed serine/threonine-protein kinase essential for neuronal cell cycle arrest and differentiation and may be involved in apoptotic cell death in neuronal diseases by triggering abortive cell cycle re-entry. Interacts with D1 and D3-type G1 cyclins. Phosphorylates SRC, NOS3, VIM/vimentin, p35/CDK5R1, MEF2A, SIPA1L1, SH3GLB1, PXN, PAK1, MCAM/MUC18, SEPT5, SYN1, DNM1, AMPH, SYNJ1, CDK16, RAC1, RHOA, CDC42, TONEBP/NFAT5, MAPT/TAU, MAP1B, histone H1, p53/TP53, HDAC1, APEX1, PTK2/FAK1, huntingtin/HTT, ATM, MAP2, NEFH and NEFM. Regulates several neuronal development and physiological processes including neuronal survival, migration and differentiation, axonal and neurite growth, synaptogenesis, oligodendrocyte differentiation, synaptic plasticity and neurotransmission, by phosphorylating key proteins. Negatively regulates the CACNA1B/CAV2.2 -mediated Ca(2+) release probability at hippocampal neuronal soma and synaptic terminals. Activated by interaction with CDK5R1 (p35) and CDK5R2 (p39), especially in postmitotic neurons, and promotes CDK5R1 (p35) expression in an autostimulation loop. Phosphorylates many downstream substrates such as Rho and Ras family small GTPases (e.g. PAK1, RAC1, RHOA, CDC42) or microtubule-binding proteins (e.g. MAPT/TAU, MAP2, MAP1B), and modulates actin dynamics to regulate neurite growth and/or spine morphogenesis. Also phosphorylates exocytosis associated proteins such as MCAM/MUC18, SEPT5, SYN1, and CDK16/PCTAIRE1 as well as endocytosis associated proteins such as DNM1, AMPH and SYNJ1 at synaptic terminals. In the mature central nervous system (CNS), regulates neurotransmitter movements by phosphorylating substrates associated with neurotransmitter release and synapse plasticity; synaptic vesicle exocytosis, vesicles fusion with the presynaptic membrane, and endocytosis. Promotes cell survival by activating anti-apoptotic proteins BCL2 and STAT3, and negatively regulating of JNK3/MAPK10 activity. Phosphorylation of p53/TP53 in response to genotoxic and oxidative stresses enhances its stabilization by preventing ubiquitin ligase-mediated proteasomal degradation, and induces transactivation of p53/TP53 target genes, thus regulating apoptosis. Phosphorylation of p35/CDK5R1 enhances its stabilization by preventing calpain-mediated proteolysis producing p25/CDK5R1 and avoiding ubiquitin ligase-mediated proteasomal degradation. During aberrant cell-cycle activity and DNA damage, p25/CDK5 activity elicits cell-cycle activity and double-strand DNA breaks that precedes neuronal death by deregulating HDAC1. DNA damage triggered phosphorylation of huntingtin/HTT in nuclei of neurons protects neurons against polyglutamine expansion as well as DNA damage mediated toxicity. Phosphorylation of PXN reduces its interaction with PTK2/FAK1 in matrix-cell focal adhesions (MCFA) during oligodendrocytes (OLs) differentiation. Negative regulator of Wnt/beta-catenin signaling pathway. Activator of the GAIT (IFN-gamma-activated inhibitor of translation) pathway, which suppresses expression of a post-transcriptional regulon of proinflammatory genes in myeloid cells; phosphorylates the linker domain of glutamyl-prolyl tRNA synthetase (EPRS) in a IFN-gamma-dependent manner, the initial event in assembly of the GAIT complex. Phosphorylation of SH3GLB1 is required for autophagy induction in starved neurons. Phosphorylation of TONEBP/NFAT5 in response to osmotic stress mediates its rapid nuclear localization. MEF2 is inactivated by phosphorylation in nucleus in response to neurotoxin, thus leading to neuronal apoptosis. APEX1 AP-endodeoxyribonuclease is repressed by phosphorylation, resulting in accumulation of DNA damage and contributing to neuronal death. NOS3 phosphorylation down regulates NOS3-derived nitrite (NO) levels. SRC phosphorylation mediates its ubiquitin-dependent degradation and thus leads to cytoskeletal reorganization. May regulate endothelial cell migration and angiogenesis via the modulation of lamellipodia formation. Involved in dendritic spine morphogenesis by mediating the EFNA1-EPHA4 signaling. The complex p35/CDK5 participates in the regulation of the circadian clock by modulating the function of CLOCK protein: phosphorylates CLOCK at 'Thr-451' and 'Thr-461' and regulates the transcriptional activity of the CLOCK-BMAL1 heterodimer in association with altered stability and subcellular distribution. In Bos taurus (Bovine), this protein is Cyclin-dependent kinase 5.